The chain runs to 96 residues: Transcription and mRNA export factor SUS1 (96 aa).

Lys68 participates in a covalent cross-link: Glycyl lysine isopeptide (Lys-Gly) (interchain with G-Cter in ubiquitin).

The protein belongs to the ENY2 family. In terms of assembly, component of the nuclear pore complex (NPC)-associated TREX-2 complex (transcription and export complex 2), composed of at least SUS1, SAC3, THP1, SEM1, and CDC31. TREX-2 contains 2 SUS1 chains. The TREX-2 complex interacts with the nucleoporin NUP1. Component of the 1.8 MDa SAGA transcription coactivator-HAT complex. SAGA is built of 5 distinct domains with specialized functions. Within the SAGA complex, SUS1, SGF11, SGF73 and UBP8 form an additional subcomplex of SAGA called the DUB module (deubiquitination module). Interacts directly with THP1, SAC3, SGF11, and with the RNA polymerase II.

Its subcellular location is the nucleus. It localises to the nucleoplasm. The protein localises to the cytoplasm. The protein resides in the P-body. Its function is as follows. Involved in mRNA export coupled transcription activation by association with both the TREX-2 and the SAGA complexes. At the promoters, SAGA is required for recruitment of the basal transcription machinery. It influences RNA polymerase II transcriptional activity through different activities such as TBP interaction and promoter selectivity, interaction with transcription activators, and chromatin modification through histone acetylation and deubiquitination. Within the SAGA complex, participates in a subcomplex required for deubiquitination of H2B and for the maintenance of steady-state H3 methylation levels. The TREX-2 complex functions in docking export-competent ribonucleoprotein particles (mRNPs) to the nuclear entrance of the nuclear pore complex (nuclear basket). TREX-2 participates in mRNA export and accurate chromatin positioning in the nucleus by tethering genes to the nuclear periphery. May also be involved in cytoplasmic mRNA decay by interaction with components of P-bodies. The protein is Transcription and mRNA export factor SUS1 of Saccharomyces cerevisiae (strain YJM789) (Baker's yeast).